We begin with the raw amino-acid sequence, 245 residues long: 14-3-3 protein zeta (245 aa).

The protein belongs to the 14-3-3 family. In terms of assembly, homodimer.

It localises to the cytoplasm. Adapter protein implicated in the regulation of a large spectrum of both general and specialized signaling pathways. Binds to a large number of partners, usually by recognition of a phosphoserine or phosphothreonine motif. Binding generally results in the modulation of the activity of the binding partner. This Xenopus tropicalis (Western clawed frog) protein is 14-3-3 protein zeta (ywhaz).